A 435-amino-acid polypeptide reads, in one-letter code: ATP-dependent RNA helicase RhlB (435 aa).

The short motif at 9–37 is the Q motif element; it reads QKFADFSLQTEIKTALNESGFEYCTPIQA. Residues 40-219 enclose the Helicase ATP-binding domain; that stretch reads LPILLQKKDI…YDHMNEPEKV (180 aa). Residue 53–60 coordinates ATP; the sequence is AQTGTGKT. The DEAD box signature appears at 165–168; that stretch reads DEAD. The region spanning 243–390 is the Helicase C-terminal domain; the sequence is KMRLLLTLLE…VTNYDSEALL (148 aa). A disordered region spans residues 395 to 435; sequence APVRVHRKHNSRPQGRSGSGGKPRSGNRNAPRRHDKTRRHS. Over residues 424-435 the composition is skewed to basic residues; sequence APRRHDKTRRHS.

It belongs to the DEAD box helicase family. RhlB subfamily. In terms of assembly, component of the RNA degradosome, which is a multiprotein complex involved in RNA processing and mRNA degradation.

The protein resides in the cytoplasm. It catalyses the reaction ATP + H2O = ADP + phosphate + H(+). Its function is as follows. DEAD-box RNA helicase involved in RNA degradation. Has RNA-dependent ATPase activity and unwinds double-stranded RNA. The sequence is that of ATP-dependent RNA helicase RhlB from Shewanella sediminis (strain HAW-EB3).